The chain runs to 435 residues: Manganese transport system membrane protein MntC (435 aa).

9 helical membrane passes run 17–37 (VLAGTLLLGTASGVLGSFVLL), 42–62 (LIGDAMAHSALPGVCLAFLFT), 68–88 (PFFLLGAALAGLLGTFCIQLI), 98–118 (SAIGIVLSVFFGVGIILLTYI), 143–163 (QDIILIAGISAVLLLLCIVFF), 166–186 (FTLITFDLAFAKGLGIPVRFL), 189–209 (LLACLIVCAVVIGLQTVGVIL), 228–248 (LTGMIIIAGITGGVSGVAGTL), and 255–275 (GMATGPLMILSATLLFLFSMI).

This sequence belongs to the ABC-3 integral membrane protein family. As to quaternary structure, the complex is probably composed of two ATP-binding proteins (MntB), two transmembrane proteins (MntC and MntD) and a solute-binding protein (MntA).

It localises to the cell membrane. Probably part of the ABC transporter complex MntABCD involved in manganese import. Probably responsible for the translocation of the substrate across the membrane. This Bacillus subtilis (strain 168) protein is Manganese transport system membrane protein MntC.